The primary structure comprises 33 residues: Suppressor protein HFN40 (33 aa).

Suppresses expansion of husk leaf blades. The protein is Suppressor protein HFN40 of Zea mays (Maize).